We begin with the raw amino-acid sequence, 368 residues long: Spermidine/putrescine import ATP-binding protein PotA (368 aa).

Residues 8–238 enclose the ABC transporter domain; the sequence is IELRGVTKNF…PANLYVARFV (231 aa). 40–47 provides a ligand contact to ATP; the sequence is GPSGCGKT.

This sequence belongs to the ABC transporter superfamily. Spermidine/putrescine importer (TC 3.A.1.11.1) family. In terms of assembly, the complex is composed of two ATP-binding proteins (PotA), two transmembrane proteins (PotB and PotC) and a solute-binding protein (PotD).

The protein localises to the cell inner membrane. It catalyses the reaction ATP + H2O + polyamine-[polyamine-binding protein]Side 1 = ADP + phosphate + polyamineSide 2 + [polyamine-binding protein]Side 1.. Part of the ABC transporter complex PotABCD involved in spermidine/putrescine import. Responsible for energy coupling to the transport system. The polypeptide is Spermidine/putrescine import ATP-binding protein PotA (Nitratidesulfovibrio vulgaris (strain ATCC 29579 / DSM 644 / CCUG 34227 / NCIMB 8303 / VKM B-1760 / Hildenborough) (Desulfovibrio vulgaris)).